Reading from the N-terminus, the 604-residue chain is Elongation factor 4 (604 aa).

The 183-residue stretch at 9–191 folds into the tr-type G domain; the sequence is DAIRNFCIIA…AVISRVPAPA (183 aa). GTP is bound by residues 21–26 and 138–141; these read DHGKST and NKID.

The protein belongs to the TRAFAC class translation factor GTPase superfamily. Classic translation factor GTPase family. LepA subfamily.

The protein resides in the cell inner membrane. The enzyme catalyses GTP + H2O = GDP + phosphate + H(+). Required for accurate and efficient protein synthesis under certain stress conditions. May act as a fidelity factor of the translation reaction, by catalyzing a one-codon backward translocation of tRNAs on improperly translocated ribosomes. Back-translocation proceeds from a post-translocation (POST) complex to a pre-translocation (PRE) complex, thus giving elongation factor G a second chance to translocate the tRNAs correctly. Binds to ribosomes in a GTP-dependent manner. The protein is Elongation factor 4 of Prosthecochloris aestuarii (strain DSM 271 / SK 413).